Here is a 674-residue protein sequence, read N- to C-terminus: tRNA wybutosine-synthesizing protein 4 (674 aa).

Residues arginine 84, glycine 109, aspartate 140, 184–185 (DL), and glutamate 212 contribute to the S-adenosyl-L-methionine site.

This sequence belongs to the methyltransferase superfamily. LCMT family.

The enzyme catalyses 7-[(3S)-3-amino-3-carboxypropyl]wyosine(37) in tRNA(Phe) + S-adenosyl-L-methionine = 7-[(3S)-(3-amino-3-methoxycarbonyl)propyl]wyosine(37) in tRNA(Phe) + S-adenosyl-L-homocysteine. The catalysed reaction is 7-[(3S)-(3-amino-3-methoxycarbonyl)propyl]wyosine(37) in tRNA(Phe) + S-adenosyl-L-methionine + CO2 = wybutosine(37) in tRNA(Phe) + S-adenosyl-L-homocysteine + 2 H(+). Its pathway is tRNA modification; wybutosine-tRNA(Phe) biosynthesis. In terms of biological role, probable S-adenosyl-L-methionine-dependent methyltransferase that acts as a component of the wybutosine biosynthesis pathway. Wybutosine is a hyper modified guanosine with a tricyclic base found at the 3'-position adjacent to the anticodon of eukaryotic phenylalanine tRNA. May methylate the carboxyl group of leucine residues to form alpha-leucine ester residues. This chain is tRNA wybutosine-synthesizing protein 4 (PPM2), found in Candida glabrata (strain ATCC 2001 / BCRC 20586 / JCM 3761 / NBRC 0622 / NRRL Y-65 / CBS 138) (Yeast).